The sequence spans 106 residues: Large ribosomal subunit protein bL21 (106 aa).

This sequence belongs to the bacterial ribosomal protein bL21 family. As to quaternary structure, part of the 50S ribosomal subunit. Contacts protein L20.

Functionally, this protein binds to 23S rRNA in the presence of protein L20. This Chlamydia pneumoniae (Chlamydophila pneumoniae) protein is Large ribosomal subunit protein bL21.